A 545-amino-acid chain; its full sequence is G-protein coupled receptor 161 (545 aa).

Over M1–E46 the chain is Extracellular. N21 and N32 each carry an N-linked (GlcNAc...) asparagine glycan. The helical transmembrane segment at F47 to T67 threads the bilayer. At L68–K80 the chain is on the cytoplasmic side. The helical transmembrane segment at F81 to V101 threads the bilayer. Residues T102–N117 are Extracellular-facing. C116 and C194 are joined by a disulfide. The N-linked (GlcNAc...) asparagine glycan is linked to N117. A helical transmembrane segment spans residues F118–I139. Residues D140–R159 lie on the Cytoplasmic side of the membrane. The helical transmembrane segment at A160 to F180 threads the bilayer. The Extracellular portion of the chain corresponds to G181–T205. Residues I206–F226 traverse the membrane as a helical segment. Residues I227–L285 are Cytoplasmic-facing. Residues I286 to I306 form a helical membrane-spanning segment. At T307–E322 the chain is on the extracellular side. Residues T323 to W343 traverse the membrane as a helical segment. The Cytoplasmic portion of the chain corresponds to N344 to R545.

This sequence belongs to the G-protein coupled receptor 1 family.

It is found in the cell projection. The protein localises to the cilium membrane. Its subcellular location is the cell membrane. Functionally, key negative regulator of Shh signaling, which promotes the processing of GLI3 into GLI3R during neural tube development. Recruited by TULP3 and the IFT-A complex to primary cilia and acts as a regulator of the PKA-dependent basal repression machinery in Shh signaling by increasing cAMP levels, leading to promote the PKA-dependent processing of GLI3 into GLI3R and repress the Shh signaling. In presence of SHH, it is removed from primary cilia and is internalized into recycling endosomes, preventing its activity and allowing activation of the Shh signaling. Its ligand is unknown. In Mus musculus (Mouse), this protein is G-protein coupled receptor 161 (Gpr161).